The chain runs to 282 residues: HTH-type transcriptional activator RhaR (282 aa).

The HTH araC/xylS-type domain maps to aspartate 179–leucine 277. DNA-binding regions (H-T-H motif) lie at residues aspartate 196 to threonine 217 and isoleucine 244 to threonine 267.

In terms of assembly, binds DNA as a dimer.

Its subcellular location is the cytoplasm. Functionally, activates expression of the rhaSR operon in response to L-rhamnose. This chain is HTH-type transcriptional activator RhaR, found in Salmonella arizonae (strain ATCC BAA-731 / CDC346-86 / RSK2980).